The chain runs to 376 residues: N-acetyldiaminopimelate deacetylase (376 aa).

Aspartate 69 is an active-site residue. Glutamate 128 serves as the catalytic Proton acceptor.

Belongs to the peptidase M20A family. N-acetyldiaminopimelate deacetylase subfamily.

The catalysed reaction is N-acetyl-(2S,6S)-2,6-diaminopimelate + H2O = (2S,6S)-2,6-diaminopimelate + acetate. It functions in the pathway amino-acid biosynthesis; L-lysine biosynthesis via DAP pathway; LL-2,6-diaminopimelate from (S)-tetrahydrodipicolinate (acetylase route): step 3/3. In terms of biological role, catalyzes the conversion of N-acetyl-diaminopimelate to diaminopimelate and acetate. This Bacillus mycoides (strain KBAB4) (Bacillus weihenstephanensis) protein is N-acetyldiaminopimelate deacetylase.